A 383-amino-acid chain; its full sequence is NIPA-like protein 2 (383 aa).

2 N-linked (GlcNAc...) asparagine glycosylation sites follow: N23 and N33. The next 9 membrane-spanning stretches (helical) occupy residues 46–66 (IHLF…ISLN), 88–108 (VLWL…FAAY), 115–135 (LIAP…VLFL), 144–164 (LLGM…APNI), 177–197 (FVGW…CILL), 208–228 (IVVL…SVKA), 243–263 (LTYA…VFQV), 278–298 (VVPV…IIFY), and 306–326 (FLTV…VFLV). The disordered stretch occupies residues 352–383 (DKVQPDSNGLSYGTLPDGGDSTRGQCGEKKES).

Belongs to the NIPA family.

The protein resides in the membrane. The protein is NIPA-like protein 2 (Nipal2) of Mus musculus (Mouse).